We begin with the raw amino-acid sequence, 203 residues long: Alpha-amylase/subtilisin inhibitor (203 aa).

The span at 1–12 shows a compositional bias: polar residues; sequence MGSRRAGSSSSP. A signal peptide spans 1 to 22; sequence MGSRRAGSSSSPLFWPAPPSRA. The tract at residues 1–34 is disordered; it reads MGSRRAGSSSSPLFWPAPPSRAADPPPVHDTDGH. Residues 15–26 are compositionally biased toward pro residues; that stretch reads WPAPPSRAADPP. 2 cysteine pairs are disulfide-bonded: cysteine 65/cysteine 112 and cysteine 166/cysteine 170.

Belongs to the protease inhibitor I3 (leguminous Kunitz-type inhibitor) family.

Its function is as follows. This protein inhibits independently subtilisin and alpha-amylase. The polypeptide is Alpha-amylase/subtilisin inhibitor (Hordeum vulgare (Barley)).